The chain runs to 505 residues: UDP-N-acetylmuramoyl-L-alanyl-D-glutamate--2,6-diaminopimelate ligase (505 aa).

Ser42 is a UDP-N-acetyl-alpha-D-muramoyl-L-alanyl-D-glutamate binding site. Gly126–Thr132 is an ATP binding site. Residues Thr168–Thr169, Ser195, Gln201, and Arg203 contribute to the UDP-N-acetyl-alpha-D-muramoyl-L-alanyl-D-glutamate site. At Lys235 the chain carries N6-carboxylysine. Meso-2,6-diaminopimelate is bound by residues Arg399, Asp423–Arg426, Gly474, and Glu478. Positions Asp423–Arg426 match the Meso-diaminopimelate recognition motif motif.

Belongs to the MurCDEF family. MurE subfamily. It depends on Mg(2+) as a cofactor. Post-translationally, carboxylation is probably crucial for Mg(2+) binding and, consequently, for the gamma-phosphate positioning of ATP.

Its subcellular location is the cytoplasm. The enzyme catalyses UDP-N-acetyl-alpha-D-muramoyl-L-alanyl-D-glutamate + meso-2,6-diaminopimelate + ATP = UDP-N-acetyl-alpha-D-muramoyl-L-alanyl-gamma-D-glutamyl-meso-2,6-diaminopimelate + ADP + phosphate + H(+). The protein operates within cell wall biogenesis; peptidoglycan biosynthesis. Functionally, catalyzes the addition of meso-diaminopimelic acid to the nucleotide precursor UDP-N-acetylmuramoyl-L-alanyl-D-glutamate (UMAG) in the biosynthesis of bacterial cell-wall peptidoglycan. In Synechocystis sp. (strain ATCC 27184 / PCC 6803 / Kazusa), this protein is UDP-N-acetylmuramoyl-L-alanyl-D-glutamate--2,6-diaminopimelate ligase.